Reading from the N-terminus, the 438-residue chain is Ribosomal protein uS12 methylthiotransferase RimO (438 aa).

One can recognise an MTTase N-terminal domain in the interval 4 to 120 (HSLFLLSLGC…ILASLGARYR (117 aa)). [4Fe-4S] cluster contacts are provided by C13, C49, C83, C144, C148, and C151. Positions 130–359 (LTPSHYAYLK…MELQEAVAES (230 aa)) constitute a Radical SAM core domain. Positions 362-429 (REFEGKEIEV…AHELYGEIVQ (68 aa)) constitute a TRAM domain.

It belongs to the methylthiotransferase family. RimO subfamily. Requires [4Fe-4S] cluster as cofactor.

The protein localises to the cytoplasm. It carries out the reaction L-aspartate(89)-[ribosomal protein uS12]-hydrogen + (sulfur carrier)-SH + AH2 + 2 S-adenosyl-L-methionine = 3-methylsulfanyl-L-aspartate(89)-[ribosomal protein uS12]-hydrogen + (sulfur carrier)-H + 5'-deoxyadenosine + L-methionine + A + S-adenosyl-L-homocysteine + 2 H(+). Catalyzes the methylthiolation of an aspartic acid residue of ribosomal protein uS12. This chain is Ribosomal protein uS12 methylthiotransferase RimO, found in Chlorobium chlorochromatii (strain CaD3).